A 424-amino-acid polypeptide reads, in one-letter code: Adenylosuccinate synthetase (424 aa).

GTP is bound by residues 12–18 (GDEGKGK) and 40–42 (GHT). The active-site Proton acceptor is the D13. Residues D13 and G40 each contribute to the Mg(2+) site. Residues 13–16 (DEGK), 38–41 (NAGH), T128, R142, Q223, T238, and R302 each bind IMP. Residue H41 is the Proton donor of the active site. 298-304 (TTTGRPR) serves as a coordination point for substrate. GTP contacts are provided by residues R304, 330–332 (HVD), and 412–414 (GVG).

It belongs to the adenylosuccinate synthetase family. In terms of assembly, homodimer. Mg(2+) is required as a cofactor.

The protein resides in the cytoplasm. The catalysed reaction is IMP + L-aspartate + GTP = N(6)-(1,2-dicarboxyethyl)-AMP + GDP + phosphate + 2 H(+). The protein operates within purine metabolism; AMP biosynthesis via de novo pathway; AMP from IMP: step 1/2. Functionally, plays an important role in the de novo pathway of purine nucleotide biosynthesis. Catalyzes the first committed step in the biosynthesis of AMP from IMP. The sequence is that of Adenylosuccinate synthetase from Acetivibrio thermocellus (strain ATCC 27405 / DSM 1237 / JCM 9322 / NBRC 103400 / NCIMB 10682 / NRRL B-4536 / VPI 7372) (Clostridium thermocellum).